We begin with the raw amino-acid sequence, 75 residues long: Tautomerase PptA (75 aa).

Residue Pro-2 is the Proton acceptor; via imino nitrogen of the active site.

This sequence belongs to the 4-oxalocrotonate tautomerase family. PptA subfamily. Homodimer.

Its subcellular location is the cytoplasm. This is Tautomerase PptA from Shigella sonnei (strain Ss046).